The chain runs to 277 residues: Large ribosomal subunit protein uL2 (277 aa).

Disordered stretches follow at residues 1 to 20 (MAVKKYRPYTPSRRQMTTAD) and 210 to 277 (GRSR…RGGK). Residues 210-221 (GRSRWLGRKPHQ) are compositionally biased toward basic residues.

Belongs to the universal ribosomal protein uL2 family. In terms of assembly, part of the 50S ribosomal subunit. Forms a bridge to the 30S subunit in the 70S ribosome.

Functionally, one of the primary rRNA binding proteins. Required for association of the 30S and 50S subunits to form the 70S ribosome, for tRNA binding and peptide bond formation. It has been suggested to have peptidyltransferase activity; this is somewhat controversial. Makes several contacts with the 16S rRNA in the 70S ribosome. The chain is Large ribosomal subunit protein uL2 from Deinococcus deserti (strain DSM 17065 / CIP 109153 / LMG 22923 / VCD115).